Here is a 253-residue protein sequence, read N- to C-terminus: Beta-crystallin B1 (253 aa).

Low complexity predominate over residues 1–18 (MSQPAAKASATAAVNPGP). Positions 1 to 53 (MSQPAAKASATAAVNPGPDGKGKAGPPPGPAPGSGPAPAPAPAPAQPAPAAKA) are disordered. N-acetylserine is present on Ser2. The tract at residues 2–59 (SQPAAKASATAAVNPGPDGKGKAGPPPGPAPGSGPAPAPAPAPAQPAPAAKAELPPGS) is N-terminal arm. The segment covering 25-47 (GPPPGPAPGSGPAPAPAPAPAQP) has biased composition (pro residues). 2 consecutive Beta/gamma crystallin 'Greek key' domains span residues 60–99 (YKLVVFEQENFQGRRVEFSGECLNLGDRGFERVRSIIVTS) and 100–144 (GPWV…RPIK). The connecting peptide stretch occupies residues 145 to 149 (MDAQE). Beta/gamma crystallin 'Greek key' domains lie at 150-191 (HKLC…RVSS) and 192-234 (GTWV…RRLR). Residues 236 to 253 (RQWHREGCFPVLAAEPPK) form a C-terminal arm region.

It belongs to the beta/gamma-crystallin family. Homo/heterodimer, or complexes of higher-order. The structure of beta-crystallin oligomers seems to be stabilized through interactions between the N-terminal arms. Post-translationally, specific cleavages in the N-terminal arm occur during lens maturation and give rise to truncated forms, leading to impaired oligomerization and protein insolubilization.

Functionally, crystallins are the dominant structural components of the vertebrate eye lens. In Bos taurus (Bovine), this protein is Beta-crystallin B1 (CRYBB1).